A 394-amino-acid chain; its full sequence is Elongation factor Tu 2 (394 aa).

The tr-type G domain maps to 10 to 204 (KPHVNVGTIG…ALDSYIPQPE (195 aa)). The tract at residues 19–26 (GHVDHGKT) is G1. 19 to 26 (GHVDHGKT) is a GTP binding site. Residue threonine 26 coordinates Mg(2+). The segment at 60–64 (GITIN) is G2. A G3 region spans residues 81-84 (DCPG). GTP contacts are provided by residues 81-85 (DCPGH) and 136-139 (NKCD). Residues 136–139 (NKCD) form a G4 region. Residues 174–176 (SAL) are G5.

This sequence belongs to the TRAFAC class translation factor GTPase superfamily. Classic translation factor GTPase family. EF-Tu/EF-1A subfamily. Monomer.

The protein localises to the cytoplasm. It carries out the reaction GTP + H2O = GDP + phosphate + H(+). In terms of biological role, GTP hydrolase that promotes the GTP-dependent binding of aminoacyl-tRNA to the A-site of ribosomes during protein biosynthesis. The sequence is that of Elongation factor Tu 2 from Yersinia pestis bv. Antiqua (strain Antiqua).